The sequence spans 350 residues: Solute carrier family 35 member E4 (350 aa).

The segment covering 19 to 30 has biased composition (low complexity); it reads GAAAGGAQAAGP. The segment at 19–42 is disordered; it reads GAAAGGAQAAGPPEWPPGSPQALR. 8 helical membrane passes run 51–71, 73–93, 110–132, 135–155, 218–238, 258–278, 279–299, and 312–332; these read MAAL…KWIF, VHGF…AALA, VLLL…RAVP, LAQL…ALLL, VTLL…AALV, ILLS…LLAL, TSAL…LILS, and YVGI…EFVA. Residues 125–179 form the EamA domain; the sequence is NVGLRAVPLDLAQLVTTTTPLFTLALSALLLGRRHHPLQLAAMGPLCLGAACSLA.

Belongs to the TPT transporter family. SLC35E subfamily.

It is found in the membrane. In terms of biological role, putative transporter. The sequence is that of Solute carrier family 35 member E4 (SLC35E4) from Homo sapiens (Human).